A 526-amino-acid chain; its full sequence is Exodeoxyribonuclease 7 large subunit (526 aa).

The interval 497–526 (AMTTEGGTPPAGAKKRSTKPAEPPKQGSLF) is disordered.

The protein belongs to the XseA family. In terms of assembly, heterooligomer composed of large and small subunits.

The protein resides in the cytoplasm. It catalyses the reaction Exonucleolytic cleavage in either 5'- to 3'- or 3'- to 5'-direction to yield nucleoside 5'-phosphates.. Its function is as follows. Bidirectionally degrades single-stranded DNA into large acid-insoluble oligonucleotides, which are then degraded further into small acid-soluble oligonucleotides. The polypeptide is Exodeoxyribonuclease 7 large subunit (Rhizobium johnstonii (strain DSM 114642 / LMG 32736 / 3841) (Rhizobium leguminosarum bv. viciae)).